A 390-amino-acid polypeptide reads, in one-letter code: Homoserine O-succinyltransferase (390 aa).

Residues 56–365 (NAVLICHALS…SPHGHDAFLL (310 aa)) form the AB hydrolase-1 domain. Ser-162 acts as the Nucleophile in catalysis. Residue Arg-232 coordinates substrate. Residues Asp-327 and His-360 contribute to the active site. Asp-361 is a substrate binding site.

The protein belongs to the AB hydrolase superfamily. MetX family. In terms of assembly, homodimer.

Its subcellular location is the cytoplasm. It catalyses the reaction L-homoserine + succinyl-CoA = O-succinyl-L-homoserine + CoA. It participates in amino-acid biosynthesis; L-methionine biosynthesis via de novo pathway; O-succinyl-L-homoserine from L-homoserine: step 1/1. Its function is as follows. Transfers a succinyl group from succinyl-CoA to L-homoserine, forming succinyl-L-homoserine. In vitro, also has serine succinyl transferase activity. In Litchfieldella anticariensis (strain DSM 16096 / CECT 5854 / CIP 108499 / LMG 22089 / FP35) (Halomonas anticariensis), this protein is Homoserine O-succinyltransferase.